We begin with the raw amino-acid sequence, 148 residues long: uncharacterized protein (148 aa).

Residues 1–21 (MLQNYAIVLGMAVAVAIWYFF) form a helical membrane-spanning segment. Positions 27–61 (APPGPNPPKPDPPKPDPPKMHMPKKKPHWMDPHLT) are disordered.

It localises to the host membrane. This is an uncharacterized protein from Frog virus 3 (isolate Goorha) (FV-3).